We begin with the raw amino-acid sequence, 152 residues long: Ribosome maturation factor RimP (152 aa).

The protein belongs to the RimP family.

The protein localises to the cytoplasm. Its function is as follows. Required for maturation of 30S ribosomal subunits. In Rubrobacter xylanophilus (strain DSM 9941 / JCM 11954 / NBRC 16129 / PRD-1), this protein is Ribosome maturation factor RimP.